A 381-amino-acid polypeptide reads, in one-letter code: GDSL esterase/lipase At3g48460 (381 aa).

Positions 1–26 (MSSSISPLLTTAISVAILLFSTISTA) are cleaved as a signal peptide. Catalysis depends on serine 45, which acts as the Nucleophile. N-linked (GlcNAc...) asparagine glycans are attached at residues asparagine 112, asparagine 140, and asparagine 258. Active-site residues include aspartate 344 and histidine 347.

This sequence belongs to the 'GDSL' lipolytic enzyme family.

It is found in the secreted. The protein is GDSL esterase/lipase At3g48460 of Arabidopsis thaliana (Mouse-ear cress).